The following is a 317-amino-acid chain: UV DNA damage endonuclease (317 aa).

This sequence belongs to the uve1/UvsE family.

Functionally, component in a DNA repair pathway. Removal of UV LIGHT damaged nucleotides. Recognizes pyrimidine dimers and cleave a phosphodiester bond immediately 5' to the lesion. The protein is UV DNA damage endonuclease of Bacillus cereus (strain ATCC 10987 / NRS 248).